The sequence spans 309 residues: MVKVYAPASSANMSVGFDVLGAAVTPVDGTLLGDVVSVEAADHFRLHNLGRFADKLPPEPRENIVYQCWERFCQALGKTIPVAMTLEKNMPIGSGLGSSACSVVAALVAMNEHCGKPLNDTRLLALMGELEGRISGSIHYDNVAPCFLGGMQLMIEENGIISQQVPGFDEWLWVLAYPGIKVSTAEARAILPAQYRRQDCIAHGRHLAGFIHACYSRQPQLAAALMKDVIAEPYRARLLPGFSQARQAVSEIGALASGISGSGPTLFALCDKPETAQRVADWLSKHYLQNQEGFVHICRLDTAGARVVG.

Pro91–Cys101 serves as a coordination point for ATP.

This sequence belongs to the GHMP kinase family. Homoserine kinase subfamily.

The protein resides in the cytoplasm. It carries out the reaction L-homoserine + ATP = O-phospho-L-homoserine + ADP + H(+). The protein operates within amino-acid biosynthesis; L-threonine biosynthesis; L-threonine from L-aspartate: step 4/5. Functionally, catalyzes the ATP-dependent phosphorylation of L-homoserine to L-homoserine phosphate. This chain is Homoserine kinase, found in Salmonella agona (strain SL483).